Reading from the N-terminus, the 413-residue chain is Protein arginine N-methyltransferase 2 (413 aa).

2 disordered regions span residues D65 to V85 and E148 to Q178. Acidic residues predominate over residues E148–G173. The RMT2 domain maps to T192–D413. S-adenosyl-L-methionine-binding positions include Y201, M230, H250–V255, E271–H273, W298–Q299, and D318.

Belongs to the class I-like SAM-binding methyltransferase superfamily. RMT2 methyltransferase family. In terms of assembly, monomer.

Its subcellular location is the cytoplasm. The protein localises to the nucleus. S-adenosyl-L-methionine-dependent protein-arginine N-methyltransferase that methylates the delta-nitrogen atom of arginine residues to form N5-methylarginine (type IV) in target proteins. Monomethylates ribosomal protein L12. In Aspergillus oryzae (strain ATCC 42149 / RIB 40) (Yellow koji mold), this protein is Protein arginine N-methyltransferase 2.